The primary structure comprises 570 residues: Sulfite reductase [NADPH] hemoprotein beta-component (570 aa).

[4Fe-4S] cluster is bound by residues C434, C440, C479, and C483. Residue C483 coordinates siroheme.

This sequence belongs to the nitrite and sulfite reductase 4Fe-4S domain family. In terms of assembly, alpha(8)-beta(8). The alpha component is a flavoprotein, the beta component is a hemoprotein. Siroheme is required as a cofactor. It depends on [4Fe-4S] cluster as a cofactor.

The enzyme catalyses hydrogen sulfide + 3 NADP(+) + 3 H2O = sulfite + 3 NADPH + 4 H(+). The protein operates within sulfur metabolism; hydrogen sulfide biosynthesis; hydrogen sulfide from sulfite (NADPH route): step 1/1. Its function is as follows. Component of the sulfite reductase complex that catalyzes the 6-electron reduction of sulfite to sulfide. This is one of several activities required for the biosynthesis of L-cysteine from sulfate. This is Sulfite reductase [NADPH] hemoprotein beta-component from Shigella flexneri serotype 5b (strain 8401).